A 374-amino-acid polypeptide reads, in one-letter code: Chaperone protein DnaJ (374 aa).

The J domain maps to 5 to 70 (DYYEVLGVNL…RKRASYDQFG (66 aa)). The segment at 133–210 (GLSRTIKVPT…CHGQGRQQQT (78 aa)) adopts a CR-type zinc-finger fold. Zn(2+) contacts are provided by C146, C149, C162, C165, C184, C187, C198, and C201. CXXCXGXG motif repeat units lie at residues 146–153 (CKTCNGSG), 162–169 (CPRCNGSG), 184–191 (CSVCRGRG), and 198–205 (CTDCHGQG).

The protein belongs to the DnaJ family. As to quaternary structure, homodimer. The cofactor is Zn(2+).

The protein localises to the cytoplasm. Participates actively in the response to hyperosmotic and heat shock by preventing the aggregation of stress-denatured proteins and by disaggregating proteins, also in an autonomous, DnaK-independent fashion. Unfolded proteins bind initially to DnaJ; upon interaction with the DnaJ-bound protein, DnaK hydrolyzes its bound ATP, resulting in the formation of a stable complex. GrpE releases ADP from DnaK; ATP binding to DnaK triggers the release of the substrate protein, thus completing the reaction cycle. Several rounds of ATP-dependent interactions between DnaJ, DnaK and GrpE are required for fully efficient folding. Also involved, together with DnaK and GrpE, in the DNA replication of plasmids through activation of initiation proteins. This Coxiella burnetii (strain RSA 331 / Henzerling II) protein is Chaperone protein DnaJ.